A 477-amino-acid chain; its full sequence is uncharacterized protein (477 aa).

A run of 12 helical transmembrane segments spans residues 31-51, 60-80, 103-123, 130-150, 177-197, 205-225, 248-268, 291-311, 334-354, 359-379, 384-404, and 433-453; these read LLRL…LLGT, LGVP…VAPF, LWFG…SLIL, MGPA…AGVG, LLYV…GWLL, LIRV…IALW, AWGL…VMVG, VGQT…GFIW, IVAF…LFFA, IGLG…MVVV, GIAL…AVFI, and VVYV…GPLV.

It belongs to the PucC family.

The protein localises to the cell membrane. This is an uncharacterized protein from Rhodobacter capsulatus (Rhodopseudomonas capsulata).